Reading from the N-terminus, the 61-residue chain is UPF0434 protein PA14_25520 (61 aa).

The protein belongs to the UPF0434 family.

The protein is UPF0434 protein PA14_25520 of Pseudomonas aeruginosa (strain UCBPP-PA14).